The following is a 513-amino-acid chain: ATP synthase subunit alpha (513 aa).

Gly169–Thr176 serves as a coordination point for ATP.

The protein belongs to the ATPase alpha/beta chains family. As to quaternary structure, F-type ATPases have 2 components, CF(1) - the catalytic core - and CF(0) - the membrane proton channel. CF(1) has five subunits: alpha(3), beta(3), gamma(1), delta(1), epsilon(1). CF(0) has three main subunits: a(1), b(2) and c(9-12). The alpha and beta chains form an alternating ring which encloses part of the gamma chain. CF(1) is attached to CF(0) by a central stalk formed by the gamma and epsilon chains, while a peripheral stalk is formed by the delta and b chains.

It is found in the cell inner membrane. The catalysed reaction is ATP + H2O + 4 H(+)(in) = ADP + phosphate + 5 H(+)(out). Produces ATP from ADP in the presence of a proton gradient across the membrane. The alpha chain is a regulatory subunit. The sequence is that of ATP synthase subunit alpha from Klebsiella pneumoniae (strain 342).